Consider the following 368-residue polypeptide: Flagellar P-ring protein (368 aa).

A signal peptide spans Met1–Ala24.

It belongs to the FlgI family. As to quaternary structure, the basal body constitutes a major portion of the flagellar organelle and consists of four rings (L,P,S, and M) mounted on a central rod.

It localises to the periplasm. The protein resides in the bacterial flagellum basal body. Assembles around the rod to form the L-ring and probably protects the motor/basal body from shearing forces during rotation. This Geobacter sulfurreducens (strain ATCC 51573 / DSM 12127 / PCA) protein is Flagellar P-ring protein.